Here is a 310-residue protein sequence, read N- to C-terminus: HPr kinase/phosphorylase (310 aa).

Active-site residues include H138 and K159. Residue 153 to 160 participates in ATP binding; the sequence is GDSGIGKS. Position 160 (S160) interacts with Mg(2+). D177 serves as the catalytic Proton acceptor; for phosphorylation activity. Proton donor; for dephosphorylation activity. Residues 201–210 are important for the catalytic mechanism of both phosphorylation and dephosphorylation; it reads LEIRGVGIID. E202 contacts Mg(2+). R243 is an active-site residue. Positions 264 to 269 are important for the catalytic mechanism of dephosphorylation; the sequence is PVQTGR.

It belongs to the HPrK/P family. In terms of assembly, homohexamer. The cofactor is Mg(2+). Mn(2+) is required as a cofactor.

It carries out the reaction [HPr protein]-L-serine + ATP = [HPr protein]-O-phospho-L-serine + ADP + H(+). The enzyme catalyses [HPr protein]-O-phospho-L-serine + phosphate + H(+) = [HPr protein]-L-serine + diphosphate. Its activity is regulated as follows. Kinase activity is inhibited by inorganic phosphate (Pi). In contrast to many other bacteria, neither kinase activity nor phosphorylase activity is affected by fructose 1,6-bisphosphate (FBP). In terms of biological role, catalyzes the ATP- as well as probably the pyrophosphate-dependent phosphorylation of 'Ser-46' in HPr, a phosphocarrier protein of the phosphoenolpyruvate-dependent sugar phosphotransferase system (PTS). HprK/P also catalyzes the pyrophosphate-producing, inorganic phosphate-dependent dephosphorylation (phosphorolysis) of seryl-phosphorylated HPr (P-Ser-HPr). The two antagonistic activities of HprK/P are regulated by several intracellular metabolites, which change their concentration in response to the absence or presence of rapidly metabolisable carbon sources (glucose, fructose, etc.) in the growth medium. Therefore, by controlling the phosphorylation state of HPr, the HPrK/P is a sensor enzyme that plays a major role in the regulation of carbon metabolism and sugar transport: it probably mediates carbon catabolite repression (CCR), and regulates PTS-catalyzed carbohydrate uptake and inducer exclusion. This is HPr kinase/phosphorylase (hprK) from Streptococcus equinus (Streptococcus bovis).